Here is a 212-residue protein sequence, read N- to C-terminus: Glycerol-3-phosphate acyltransferase (212 aa).

5 helical membrane-spanning segments follow: residues Ile3 to Gly23, Ile70 to Ile90, Ala110 to Leu130, Ile143 to Leu163, and Thr164 to Arg184.

The protein belongs to the PlsY family. As to quaternary structure, probably interacts with PlsX.

Its subcellular location is the cell membrane. It catalyses the reaction an acyl phosphate + sn-glycerol 3-phosphate = a 1-acyl-sn-glycero-3-phosphate + phosphate. It functions in the pathway lipid metabolism; phospholipid metabolism. Functionally, catalyzes the transfer of an acyl group from acyl-phosphate (acyl-PO(4)) to glycerol-3-phosphate (G3P) to form lysophosphatidic acid (LPA). This enzyme utilizes acyl-phosphate as fatty acyl donor, but not acyl-CoA or acyl-ACP. The chain is Glycerol-3-phosphate acyltransferase from Streptococcus agalactiae serotype III (strain NEM316).